Consider the following 359-residue polypeptide: Ribosomal RNA large subunit methyltransferase M (359 aa).

S-adenosyl-L-methionine is bound by residues Ser186, 219 to 222 (CPGG), Asp238, Asp258, and Asp275. The Proton acceptor role is filled by Lys304.

Belongs to the class I-like SAM-binding methyltransferase superfamily. RNA methyltransferase RlmE family. RlmM subfamily. As to quaternary structure, monomer.

The protein localises to the cytoplasm. The catalysed reaction is cytidine(2498) in 23S rRNA + S-adenosyl-L-methionine = 2'-O-methylcytidine(2498) in 23S rRNA + S-adenosyl-L-homocysteine + H(+). Its function is as follows. Catalyzes the 2'-O-methylation at nucleotide C2498 in 23S rRNA. The protein is Ribosomal RNA large subunit methyltransferase M of Vibrio vulnificus (strain YJ016).